Reading from the N-terminus, the 180-residue chain is Putative manganese efflux pump MntP (180 aa).

The next 6 helical transmembrane spans lie at 6–26, 34–54, 67–87, 102–122, 131–151, and 160–180; these read LMAL…GIGL, ILQI…TGWL, AAVI…WAAW, FWGL…AGFT, LLAA…GLVF, and GERA…KLFF.

This sequence belongs to the MntP (TC 9.B.29) family.

It localises to the cell membrane. In terms of biological role, probably functions as a manganese efflux pump. The chain is Putative manganese efflux pump MntP from Pelotomaculum thermopropionicum (strain DSM 13744 / JCM 10971 / SI).